We begin with the raw amino-acid sequence, 177 residues long: Large ribosomal subunit protein uL6 (177 aa).

It belongs to the universal ribosomal protein uL6 family. In terms of assembly, part of the 50S ribosomal subunit.

Its function is as follows. This protein binds to the 23S rRNA, and is important in its secondary structure. It is located near the subunit interface in the base of the L7/L12 stalk, and near the tRNA binding site of the peptidyltransferase center. The polypeptide is Large ribosomal subunit protein uL6 (Psychrobacter arcticus (strain DSM 17307 / VKM B-2377 / 273-4)).